The primary structure comprises 162 residues: NADH-quinone oxidoreductase subunit I 2 (162 aa).

4Fe-4S ferredoxin-type domains lie at 52 to 82 and 93 to 122; these read LRRY…IEAG and VRYD…EGPN. [4Fe-4S] cluster is bound by residues Cys62, Cys65, Cys68, Cys72, Cys102, Cys105, Cys108, and Cys112.

The protein belongs to the complex I 23 kDa subunit family. NDH-1 is composed of 14 different subunits. Subunits NuoA, H, J, K, L, M, N constitute the membrane sector of the complex. [4Fe-4S] cluster is required as a cofactor.

It is found in the cell inner membrane. It catalyses the reaction a quinone + NADH + 5 H(+)(in) = a quinol + NAD(+) + 4 H(+)(out). Functionally, NDH-1 shuttles electrons from NADH, via FMN and iron-sulfur (Fe-S) centers, to quinones in the respiratory chain. The immediate electron acceptor for the enzyme in this species is believed to be ubiquinone. Couples the redox reaction to proton translocation (for every two electrons transferred, four hydrogen ions are translocated across the cytoplasmic membrane), and thus conserves the redox energy in a proton gradient. The chain is NADH-quinone oxidoreductase subunit I 2 from Rhodopseudomonas palustris (strain BisB5).